The sequence spans 185 residues: MRFFLLLCFFLPCFQAINLGLKVLELCTTGSCISQSASCVTGDIVNVTQVDRTHVVMCADFRHIKYTDVGRTFRIKFSDVTCSWENTSPADVVFPGNHILQFTVLGVCFDNKVVGGCQNINEPCPEPHTVFHLQREDITLLELCVQAAGFNAQDVGVKYDFSLRHKNCLRYKRTLPPHEVVDEDY.

The signal sequence occupies residues 1 to 16; it reads MRFFLLLCFFLPCFQA.

The protein is Non-structural protein 7a of Rousettus leschenaultii (Leschenault's rousette).